Reading from the N-terminus, the 146-residue chain is Large-conductance mechanosensitive channel (146 aa).

2 helical membrane passes run Ala-12–Phe-32 and Gly-83–Ile-103.

Belongs to the MscL family. As to quaternary structure, homopentamer.

It localises to the cell inner membrane. Channel that opens in response to stretch forces in the membrane lipid bilayer. May participate in the regulation of osmotic pressure changes within the cell. This chain is Large-conductance mechanosensitive channel, found in Phocaeicola vulgatus (strain ATCC 8482 / DSM 1447 / JCM 5826 / CCUG 4940 / NBRC 14291 / NCTC 11154) (Bacteroides vulgatus).